A 656-amino-acid polypeptide reads, in one-letter code: MKNQTKSNSLFQLSTNYIPTGDQPEAIKKLSEFKTKQQVLLGATGTGKTFTIANVIQNSQLPTVVIAHNKTLAGQLFNELKQLFPKNAVEYFISYFDFYQPEAYLPSKGIYIEKSATVNEAIKRLRVSTLHSLSTRKDVIVVGSVASIYPTSSPSDFVKYCLWFVVGKDYDLKTIKDRLVSLNYVVNKQQLTPGKFRFQGDVLEVFPGYSDAFVIRISFFDTKVEQICQIDPLTNKILNQLFEIKIGPADEYVVNQSDLDIAIKNIKQELQERVNYFNKQNLVERAQRLATITNHDLNDLKAWGFCSGVENYARHLELRMANSTPYSIFDYFKGDWLLVIDESHQTLPQLNGMYNTDLSRKQSLIDYGFRLPSALDNRPLSFAELQQKMQKVIYVSATPRDKEISLSQNNVIEQLVRPTYLVDPIIVVKPKDNQVEDLIEEIINQRQNNTRTFVTVLTIKMAENLTEYLKERKIKVAYIHKDIKALERLLLINDLRRGEYECLVGINLLREGLDVPEVALVCIFDADIPGLPRDERSLIQIIGRAARNEHGRVVMYANHVTEQMQKAIDETKRRRTVQMEYNKLHNKTPKTVVKPLTFVQPIKLKAKSNAEKNAALIKQLTKEMKKAAANQNYELAIEIRDSIFELEKEIGSKIKV.

The Helicase ATP-binding domain maps to 29-414 (KLSEFKTKQQ…SLSQNNVIEQ (386 aa)). An ATP-binding site is contributed by 42-49 (GATGTGKT). The Beta-hairpin motif lies at 95 to 118 (YFDFYQPEAYLPSKGIYIEKSATV). Residues 434 to 596 (QVEDLIEEII…KTPKTVVKPL (163 aa)) form the Helicase C-terminal domain. A UVR domain is found at 614–649 (AALIKQLTKEMKKAAANQNYELAIEIRDSIFELEKE).

This sequence belongs to the UvrB family. In terms of assembly, forms a heterotetramer with UvrA during the search for lesions. Interacts with UvrC in an incision complex.

It is found in the cytoplasm. The UvrABC repair system catalyzes the recognition and processing of DNA lesions. A damage recognition complex composed of 2 UvrA and 2 UvrB subunits scans DNA for abnormalities. Upon binding of the UvrA(2)B(2) complex to a putative damaged site, the DNA wraps around one UvrB monomer. DNA wrap is dependent on ATP binding by UvrB and probably causes local melting of the DNA helix, facilitating insertion of UvrB beta-hairpin between the DNA strands. Then UvrB probes one DNA strand for the presence of a lesion. If a lesion is found the UvrA subunits dissociate and the UvrB-DNA preincision complex is formed. This complex is subsequently bound by UvrC and the second UvrB is released. If no lesion is found, the DNA wraps around the other UvrB subunit that will check the other stand for damage. In Mycoplasma genitalium (strain ATCC 33530 / DSM 19775 / NCTC 10195 / G37) (Mycoplasmoides genitalium), this protein is UvrABC system protein B.